The sequence spans 687 residues: DNA ligase (687 aa).

NAD(+) is bound by residues 34-38 (DAEYD), 83-84 (SL), and Glu-117. Lys-119 serves as the catalytic N6-AMP-lysine intermediate. Positions 140, 182, 298, and 322 each coordinate NAD(+). Zn(2+) contacts are provided by Cys-416, Cys-419, Cys-434, and Cys-439. The BRCT domain maps to 609-687 (EARGPFAGKT…EEEFVRLLKE (79 aa)).

Belongs to the NAD-dependent DNA ligase family. LigA subfamily. The cofactor is Mg(2+). Mn(2+) serves as cofactor.

The catalysed reaction is NAD(+) + (deoxyribonucleotide)n-3'-hydroxyl + 5'-phospho-(deoxyribonucleotide)m = (deoxyribonucleotide)n+m + AMP + beta-nicotinamide D-nucleotide.. Functionally, DNA ligase that catalyzes the formation of phosphodiester linkages between 5'-phosphoryl and 3'-hydroxyl groups in double-stranded DNA using NAD as a coenzyme and as the energy source for the reaction. It is essential for DNA replication and repair of damaged DNA. This chain is DNA ligase, found in Anaeromyxobacter sp. (strain K).